The sequence spans 48 residues: Sulfide dehydrogenase [flavocytochrome c] flavoprotein chain (48 aa).

Val-40–Asn-46 is an FAD binding site.

As to quaternary structure, dimer of one cytochrome and one flavoprotein.

The protein localises to the periplasm. The catalysed reaction is hydrogen sulfide + 2 Fe(III)-[cytochrome c] = sulfur + 2 Fe(II)-[cytochrome c] + H(+). The sequence is that of Sulfide dehydrogenase [flavocytochrome c] flavoprotein chain from Chlorobaculum thiosulfatiphilum (Chlorobium limicola f.sp. thiosulfatophilum).